Consider the following 256-residue polypeptide: POU domain class 2-associating factor 1 (256 aa).

Positions 1-23 (MLWQKPTAPEQAPAPPRPYQGVR) are disordered. An OCA domain is found at 16 to 38 (PRPYQGVRVKEPVKELLRRKRGH).

The protein belongs to the POU2AF family. As to quaternary structure, interacts with POU2F1/OCT1 and POU2F2/OCT2; the interaction increases POU2F1 and POU2F2 transactivation activity. In terms of processing, ubiquitinated; mediated by SIAH1 or SIAH2 and leading to its subsequent proteasomal degradation.

It localises to the nucleus. Transcriptional coactivator that specifically associates with either POU2F1/OCT1 or POU2F2/OCT2. It boosts the POU2F1/OCT1 mediated promoter activity and to a lesser extent, that of POU2F2/OCT2. It recognizes the POU domains of POU2F1/OCT1 and POU2F2/OCT2. It is essential for the response of B-cells to antigens and required for the formation of germinal centers. Regulates IL6 expression in B cells as POU2F2/OCT2 coactivator. This is POU domain class 2-associating factor 1 (POU2AF1) from Bos taurus (Bovine).